A 562-amino-acid chain; its full sequence is Probable E3 ubiquitin-protein ligase ARI7 (562 aa).

The disordered stretch occupies residues 1–39 (MDSEEDMLDAHDMESGEDDFYSGGTDDCNDSDDGEPDYG). The segment covering 27 to 39 (DCNDSDDGEPDYG) has biased composition (acidic residues). Positions 133–346 (SELTCGICFD…GGFYACNRYE (214 aa)) are TRIAD supradomain. The Zn(2+) site is built by C137, C140, C154, H156, C159, C162, C182, C187, C226, C231, C248, C250, C255, C258, H263, C268, C295, and C298. The RING-type 1 zinc finger occupies 137–187 (CGICFDSYPPEKIASVSCGHPFCTTCWTGYISTTINDGPGCLMLRCPDPSC). The IBR-type zinc finger occupies 206-268 (EKYNRYFLRS…TEEAHRPVDC (63 aa)). An RING-type 2; atypical zinc finger spans residues 295 to 325 (CPRCKRPIEKNQGCMHMTCTPPCKYEFCWLC). Residue C308 is part of the active site. Zn(2+) is bound by residues C313, C317, C322, C325, H332, and C342. Positions 524 to 562 (ACSSKSTSSKSTGCSSKTRGKGKGSSRTGGSSRNPDDNL) are disordered. A compositionally biased stretch (low complexity) spans 525 to 540 (CSSKSTSSKSTGCSSK).

Belongs to the RBR family. Ariadne subfamily. Zn(2+) serves as cofactor. Ubiquitous.

The enzyme catalyses [E2 ubiquitin-conjugating enzyme]-S-ubiquitinyl-L-cysteine + [acceptor protein]-L-lysine = [E2 ubiquitin-conjugating enzyme]-L-cysteine + [acceptor protein]-N(6)-ubiquitinyl-L-lysine.. It participates in protein modification; protein ubiquitination. Its function is as follows. Might act as an E3 ubiquitin-protein ligase, or as part of E3 complex, which accepts ubiquitin from specific E2 ubiquitin-conjugating enzymes and then transfers it to substrates. The polypeptide is Probable E3 ubiquitin-protein ligase ARI7 (ARI7) (Arabidopsis thaliana (Mouse-ear cress)).